Here is a 342-residue protein sequence, read N- to C-terminus: Hypoxia responsive morphology factor C (342 aa).

A Bipartite nuclear localization signal motif is present at residues 46–68 (RMKIPRRKSEYSSHDRLKRARKI). Positions 151–181 (ADDAWAYNAADMDTAVKFFSEAIYKAIESSP) are RNA recognition motif (RRM)-like domain.

It belongs to the hrmA family.

Its subcellular location is the nucleus. Probably modulates the generation of the hypoxia-typic morphotype (called H-MORPH) with altered biofilm architecture that leads to increased host inflammation, rapid disease progression, and mortality in a murine model of invasive aspergillosis. The chain is Hypoxia responsive morphology factor C from Aspergillus fumigatus (strain CBS 144.89 / FGSC A1163 / CEA10) (Neosartorya fumigata).